The following is a 344-amino-acid chain: uncharacterized protein (344 aa).

The segment covering 323–332 has biased composition (basic and acidic residues); sequence KQQEQREQGR. The tract at residues 323-344 is disordered; it reads KQQEQREQGRRAAYLQQRGMER.

This is an uncharacterized protein from Bacillus anthracis.